Consider the following 239-residue polypeptide: Uridylate kinase (239 aa).

13–16 contributes to the ATP binding site; the sequence is KLSG. Glycine 55 serves as a coordination point for UMP. ATP contacts are provided by glycine 56 and arginine 60. UMP-binding positions include aspartate 75 and 136–143; that span reads TGNPFFTT. Positions 163, 164, 169, and 172 each coordinate ATP.

This sequence belongs to the UMP kinase family. In terms of assembly, homohexamer.

Its subcellular location is the cytoplasm. The enzyme catalyses UMP + ATP = UDP + ADP. It participates in pyrimidine metabolism; CTP biosynthesis via de novo pathway; UDP from UMP (UMPK route): step 1/1. With respect to regulation, inhibited by UTP. Functionally, catalyzes the reversible phosphorylation of UMP to UDP. The chain is Uridylate kinase from Neisseria gonorrhoeae (strain ATCC 700825 / FA 1090).